Here is a 410-residue protein sequence, read N- to C-terminus: LL-diaminopimelate aminotransferase (410 aa).

Residues tyrosine 15 and glycine 42 each coordinate substrate. Pyridoxal 5'-phosphate contacts are provided by residues tyrosine 72, 108-109 (SK), tyrosine 132, asparagine 187, tyrosine 218, and 246-248 (SFS). Substrate is bound by residues lysine 109, tyrosine 132, and asparagine 187. Lysine 249 carries the post-translational modification N6-(pyridoxal phosphate)lysine. Arginine 257 and asparagine 292 together coordinate pyridoxal 5'-phosphate. Substrate contacts are provided by asparagine 292 and arginine 388.

The protein belongs to the class-I pyridoxal-phosphate-dependent aminotransferase family. LL-diaminopimelate aminotransferase subfamily. Homodimer. Requires pyridoxal 5'-phosphate as cofactor.

The enzyme catalyses (2S,6S)-2,6-diaminopimelate + 2-oxoglutarate = (S)-2,3,4,5-tetrahydrodipicolinate + L-glutamate + H2O + H(+). The protein operates within amino-acid biosynthesis; L-lysine biosynthesis via DAP pathway; LL-2,6-diaminopimelate from (S)-tetrahydrodipicolinate (aminotransferase route): step 1/1. Its function is as follows. Involved in the synthesis of meso-diaminopimelate (m-DAP or DL-DAP), required for both lysine and peptidoglycan biosynthesis. Catalyzes the direct conversion of tetrahydrodipicolinate to LL-diaminopimelate. The sequence is that of LL-diaminopimelate aminotransferase from Thermosynechococcus vestitus (strain NIES-2133 / IAM M-273 / BP-1).